The chain runs to 627 residues: Carnitine O-acetyltransferase (627 aa).

The propeptide occupies 1-30; it reads MDRKQKQAEKARPYGLLKPAALGKIPGRFQ. An N6-succinyllysine modification is found at lysine 94. Lysine 262 is modified (N6-acetyllysine; alternate). An N6-succinyllysine; alternate modification is found at lysine 262. Lysine 269 is modified (N6-acetyllysine). The active-site Proton acceptor is the histidine 344. CoA is bound by residues lysine 420 and 424–431; that span reads KSEKISPD. Positions 453 and 455 each coordinate (R)-carnitine. Serine 457 serves as a coordination point for CoA. Threonine 466 is a binding site for (R)-carnitine. Glutamine 556 is a CoA binding site. The Microbody targeting signal motif lies at 625-627; the sequence is SKL.

Belongs to the carnitine/choline acetyltransferase family. Monomer.

It localises to the endoplasmic reticulum. The protein resides in the peroxisome. Its subcellular location is the mitochondrion inner membrane. It carries out the reaction (R)-carnitine + acetyl-CoA = O-acetyl-(R)-carnitine + CoA. The catalysed reaction is propanoyl-CoA + (R)-carnitine = O-propanoyl-(R)-carnitine + CoA. It catalyses the reaction butanoyl-CoA + (R)-carnitine = O-butanoyl-(R)-carnitine + CoA. The enzyme catalyses hexanoyl-CoA + (R)-carnitine = O-hexanoyl-(R)-carnitine + CoA. It carries out the reaction octanoyl-CoA + (R)-carnitine = O-octanoyl-(R)-carnitine + CoA. The catalysed reaction is decanoyl-CoA + (R)-carnitine = O-decanoyl-(R)-carnitine + CoA. It catalyses the reaction 3-methylbutanoyl-CoA + (R)-carnitine = O-3-methylbutanoyl-(R)-carnitine + CoA. The enzyme catalyses 2-methylpropanoyl-CoA + (R)-carnitine = O-isobutanoyl-(R)-carnitine + CoA. It carries out the reaction 2-methylbutanoyl-CoA + (R)-carnitine = O-2-methylbutanoyl-(R)-carnitine + CoA. The catalysed reaction is acetoacetyl-CoA + (R)-carnitine = O-3-oxobutanoyl-(R)-carnitine + CoA. It catalyses the reaction 3-hydroxybutanoyl-CoA + (R)-carnitine = O-3-hydroxybutanoyl-(R)-carnitine + CoA. The enzyme catalyses 4,8-dimethylnonanoyl-CoA + (R)-carnitine = O-4,8-dimethylnonanoyl-(R)-carnitine + CoA. It carries out the reaction 2,6-dimethylheptanoyl-CoA + (R)-carnitine = O-2,6-dimethylheptanoyl-(R)-carnitine + CoA. In terms of biological role, catalyzes the reversible transfer of acyl groups from carnitine to coenzyme A (CoA) and regulates the acyl-CoA/CoA ratio. Also plays a crucial role in the transport of fatty acids for beta-oxidation. Responsible for the synthesis of short- and branched-chain acylcarnitines. Active towards some branched-chain amino acid oxidation pathway (BCAAO) intermediates. Trans-2-enoyl-CoAs and 2-methylacyl-CoAs are poor substrates. The chain is Carnitine O-acetyltransferase (CRAT) from Columba livia (Rock dove).